The following is a 94-amino-acid chain: Co-chaperonin GroES (94 aa).

The protein belongs to the GroES chaperonin family. Heptamer of 7 subunits arranged in a ring. Interacts with the chaperonin GroEL.

It localises to the cytoplasm. In terms of biological role, together with the chaperonin GroEL, plays an essential role in assisting protein folding. The GroEL-GroES system forms a nano-cage that allows encapsulation of the non-native substrate proteins and provides a physical environment optimized to promote and accelerate protein folding. GroES binds to the apical surface of the GroEL ring, thereby capping the opening of the GroEL channel. This Streptococcus agalactiae protein is Co-chaperonin GroES.